Consider the following 83-residue polypeptide: Exodeoxyribonuclease 7 small subunit (83 aa).

The protein belongs to the XseB family. In terms of assembly, heterooligomer composed of large and small subunits.

Its subcellular location is the cytoplasm. The enzyme catalyses Exonucleolytic cleavage in either 5'- to 3'- or 3'- to 5'-direction to yield nucleoside 5'-phosphates.. Functionally, bidirectionally degrades single-stranded DNA into large acid-insoluble oligonucleotides, which are then degraded further into small acid-soluble oligonucleotides. The polypeptide is Exodeoxyribonuclease 7 small subunit (Rhodopseudomonas palustris (strain ATCC BAA-98 / CGA009)).